Here is a 134-residue protein sequence, read N- to C-terminus: Profilin-4 (134 aa).

Belongs to the profilin family. Occurs in many kinds of cells as a complex with monomeric actin in a 1:1 ratio. Specifically expressed in mature and germinating pollen grains, and growing pollen tubes (at protein level).

Its subcellular location is the cytoplasm. It is found in the cytoskeleton. In terms of biological role, binds to actin monomers and regulates the organization of the actin cytoskeleton. At high concentrations, profilin prevents the polymerization of actin, whereas it enhances it at low concentrations. At low concentrations, associates with the poly-proline motif of formins to enhance actin filament elongation rate. Acts redundantly with PRF5 to regulate apical actin polymerization at the tip of pollen tube and control polarized pollen tube growth. Functions probably by favoring formin-mediated actin polymerization at pollen tube tips. This chain is Profilin-4, found in Arabidopsis thaliana (Mouse-ear cress).